The following is a 398-amino-acid chain: 1-deoxy-D-xylulose 5-phosphate reductoisomerase (398 aa).

NADPH-binding residues include Thr-10, Gly-11, Ser-12, Ile-13, Gly-36, Arg-37, Asn-38, and Asn-124. Position 125 (Lys-125) interacts with 1-deoxy-D-xylulose 5-phosphate. Residue Glu-126 coordinates NADPH. Asp-150 serves as a coordination point for Mn(2+). Residues Ser-151, Glu-152, Ser-186, and His-209 each contribute to the 1-deoxy-D-xylulose 5-phosphate site. Glu-152 is a binding site for Mn(2+). Position 215 (Gly-215) interacts with NADPH. Ser-222, Asn-227, Lys-228, and Glu-231 together coordinate 1-deoxy-D-xylulose 5-phosphate. Glu-231 is a binding site for Mn(2+).

It belongs to the DXR family. As to quaternary structure, homodimer. Mg(2+) is required as a cofactor. Requires Mn(2+) as cofactor.

It catalyses the reaction 2-C-methyl-D-erythritol 4-phosphate + NADP(+) = 1-deoxy-D-xylulose 5-phosphate + NADPH + H(+). The protein operates within isoprenoid biosynthesis; isopentenyl diphosphate biosynthesis via DXP pathway; isopentenyl diphosphate from 1-deoxy-D-xylulose 5-phosphate: step 1/6. Catalyzes the NADPH-dependent rearrangement and reduction of 1-deoxy-D-xylulose-5-phosphate (DXP) to 2-C-methyl-D-erythritol 4-phosphate (MEP). This is 1-deoxy-D-xylulose 5-phosphate reductoisomerase from Yersinia pseudotuberculosis serotype O:1b (strain IP 31758).